Consider the following 186-residue polypeptide: ATP synthase subunit delta (186 aa).

This sequence belongs to the ATPase delta chain family. As to quaternary structure, F-type ATPases have 2 components, F(1) - the catalytic core - and F(0) - the membrane proton channel. F(1) has five subunits: alpha(3), beta(3), gamma(1), delta(1), epsilon(1). F(0) has three main subunits: a(1), b(2) and c(10-14). The alpha and beta chains form an alternating ring which encloses part of the gamma chain. F(1) is attached to F(0) by a central stalk formed by the gamma and epsilon chains, while a peripheral stalk is formed by the delta and b chains.

The protein resides in the cell inner membrane. In terms of biological role, f(1)F(0) ATP synthase produces ATP from ADP in the presence of a proton or sodium gradient. F-type ATPases consist of two structural domains, F(1) containing the extramembraneous catalytic core and F(0) containing the membrane proton channel, linked together by a central stalk and a peripheral stalk. During catalysis, ATP synthesis in the catalytic domain of F(1) is coupled via a rotary mechanism of the central stalk subunits to proton translocation. Functionally, this protein is part of the stalk that links CF(0) to CF(1). It either transmits conformational changes from CF(0) to CF(1) or is implicated in proton conduction. In Leptospira borgpetersenii serovar Hardjo-bovis (strain JB197), this protein is ATP synthase subunit delta.